A 1334-amino-acid polypeptide reads, in one-letter code: CRISPR-associated endonuclease Cas9 (1334 aa).

Residue Asp-10 is the For RuvC-like nuclease domain of the active site. Positions 10, 765, and 769 each coordinate Mn(2+). The region spanning Thr-773–Leu-924 is the HNH Cas9-type domain. The active-site Proton acceptor for HNH nuclease domain is the His-843. His-986 contacts Mn(2+).

This sequence belongs to the CRISPR-associated protein Cas9 family. Subtype II-A subfamily. Monomer. Binds crRNA and tracrRNA. Mg(2+) serves as cofactor.

Functionally, CRISPR (clustered regularly interspaced short palindromic repeat) is an adaptive immune system that provides protection against mobile genetic elements (viruses, transposable elements and conjugative plasmids). CRISPR clusters contain spacers, sequences complementary to antecedent mobile elements, and target invading nucleic acids. CRISPR clusters are transcribed and processed into CRISPR RNA (crRNA). In type II CRISPR systems correct processing of pre-crRNA requires a trans-encoded small RNA (tracrRNA), endogenous ribonuclease 3 (rnc) and this protein. The tracrRNA serves as a guide for ribonuclease 3-aided processing of pre-crRNA. Subsequently Cas9/crRNA/tracrRNA endonucleolytically cleaves linear or circular dsDNA target complementary to the spacer; Cas9 is inactive in the absence of the 2 guide RNAs (gRNA). Cas9 recognizes the protospacer adjacent motif (PAM) in the CRISPR repeat sequences to help distinguish self versus nonself, as targets within the bacterial CRISPR locus do not have PAMs. PAM recognition is also required for catalytic activity. This is CRISPR-associated endonuclease Cas9 from Listeria innocua serovar 6a (strain ATCC BAA-680 / CLIP 11262).